The chain runs to 196 residues: Adenylyl-sulfate kinase (196 aa).

G31–S38 lines the ATP pocket. S105 serves as the catalytic Phosphoserine intermediate.

Belongs to the APS kinase family.

It catalyses the reaction adenosine 5'-phosphosulfate + ATP = 3'-phosphoadenylyl sulfate + ADP + H(+). It functions in the pathway sulfur metabolism; hydrogen sulfide biosynthesis; sulfite from sulfate: step 2/3. Its function is as follows. Catalyzes the synthesis of activated sulfate. The polypeptide is Adenylyl-sulfate kinase (Aeromonas salmonicida (strain A449)).